The sequence spans 380 residues: Cytochrome b (380 aa).

Transmembrane regions (helical) follow at residues 34–54, 78–99, 114–134, and 179–199; these read FGSLLGICLLTQILTGLLLAT, WLIRNLHANGASFFFICIYLHI, WNTGIILLLALMATAFVGYVL, and FFALHFLLPFMIAGLAFIHLT. Heme b is bound by residues His84 and His98. Positions 183 and 197 each coordinate heme b. Residue His202 coordinates a ubiquinone. 4 helical membrane passes run 227 to 247, 289 to 309, 321 to 341, and 348 to 368; these read LKDILGFIVMFLPLTTLALFS, LGGVLALAASVLVLFLTPLLH, FSQFLFWTLVANLFILTWVGS, and FIIIGQLASLTYFTILLLLFP.

It belongs to the cytochrome b family. The cytochrome bc1 complex contains 11 subunits: 3 respiratory subunits (MT-CYB, CYC1 and UQCRFS1), 2 core proteins (UQCRC1 and UQCRC2) and 6 low-molecular weight proteins (UQCRH/QCR6, UQCRB/QCR7, UQCRQ/QCR8, UQCR10/QCR9, UQCR11/QCR10 and a cleavage product of UQCRFS1). This cytochrome bc1 complex then forms a dimer. The cofactor is heme b.

It is found in the mitochondrion inner membrane. Its function is as follows. Component of the ubiquinol-cytochrome c reductase complex (complex III or cytochrome b-c1 complex) that is part of the mitochondrial respiratory chain. The b-c1 complex mediates electron transfer from ubiquinol to cytochrome c. Contributes to the generation of a proton gradient across the mitochondrial membrane that is then used for ATP synthesis. In Alle alle (Dovekie), this protein is Cytochrome b (MT-CYB).